The sequence spans 139 residues: Small ribosomal subunit protein uS19 (139 aa).

Belongs to the universal ribosomal protein uS19 family.

Its function is as follows. Protein S19 forms a complex with S13 that binds strongly to the 16S ribosomal RNA. This is Small ribosomal subunit protein uS19 from Ignicoccus hospitalis (strain KIN4/I / DSM 18386 / JCM 14125).